A 113-amino-acid chain; its full sequence is UPF0342 protein spyM18_0873 (113 aa).

Belongs to the UPF0342 family.

The chain is UPF0342 protein spyM18_0873 from Streptococcus pyogenes serotype M18 (strain MGAS8232).